The chain runs to 274 residues: 3-methyl-2-oxobutanoate hydroxymethyltransferase (274 aa).

Residues Asp-44 and Asp-83 each contribute to the Mg(2+) site. 3-methyl-2-oxobutanoate is bound by residues 44–45 (DS), Asp-83, and Lys-113. Mg(2+) is bound at residue Glu-115. The active-site Proton acceptor is Glu-182.

It belongs to the PanB family. As to quaternary structure, homodecamer; pentamer of dimers. Mg(2+) serves as cofactor.

The protein localises to the cytoplasm. It carries out the reaction 3-methyl-2-oxobutanoate + (6R)-5,10-methylene-5,6,7,8-tetrahydrofolate + H2O = 2-dehydropantoate + (6S)-5,6,7,8-tetrahydrofolate. It participates in cofactor biosynthesis; (R)-pantothenate biosynthesis; (R)-pantoate from 3-methyl-2-oxobutanoate: step 1/2. Its function is as follows. Catalyzes the reversible reaction in which hydroxymethyl group from 5,10-methylenetetrahydrofolate is transferred onto alpha-ketoisovalerate to form ketopantoate. In Campylobacter jejuni (strain RM1221), this protein is 3-methyl-2-oxobutanoate hydroxymethyltransferase.